Reading from the N-terminus, the 494-residue chain is Ketol-acid reductoisomerase (NADP(+)) (494 aa).

A KARI N-terminal Rossmann domain is found at 14-208; the sequence is LDQIGRCRFM…GGDRAGVLES (195 aa). Residues 45–48, arginine 68, arginine 76, serine 78, and 108–110 contribute to the NADP(+) site; these read CGAQ and DKQ. The active site involves histidine 132. Residue glycine 158 participates in NADP(+) binding. KARI C-terminal knotted domains lie at 209-344 and 345-487; these read SFVA…NAPE and YNGK…MTDM. The Mg(2+) site is built by aspartate 217, glutamate 221, glutamate 389, and glutamate 393. Serine 414 is a binding site for substrate.

This sequence belongs to the ketol-acid reductoisomerase family. Mg(2+) is required as a cofactor.

It catalyses the reaction (2R)-2,3-dihydroxy-3-methylbutanoate + NADP(+) = (2S)-2-acetolactate + NADPH + H(+). It carries out the reaction (2R,3R)-2,3-dihydroxy-3-methylpentanoate + NADP(+) = (S)-2-ethyl-2-hydroxy-3-oxobutanoate + NADPH + H(+). The protein operates within amino-acid biosynthesis; L-isoleucine biosynthesis; L-isoleucine from 2-oxobutanoate: step 2/4. Its pathway is amino-acid biosynthesis; L-valine biosynthesis; L-valine from pyruvate: step 2/4. Its function is as follows. Involved in the biosynthesis of branched-chain amino acids (BCAA). Catalyzes an alkyl-migration followed by a ketol-acid reduction of (S)-2-acetolactate (S2AL) to yield (R)-2,3-dihydroxy-isovalerate. In the isomerase reaction, S2AL is rearranged via a Mg-dependent methyl migration to produce 3-hydroxy-3-methyl-2-ketobutyrate (HMKB). In the reductase reaction, this 2-ketoacid undergoes a metal-dependent reduction by NADPH to yield (R)-2,3-dihydroxy-isovalerate. This chain is Ketol-acid reductoisomerase (NADP(+)), found in Pseudoalteromonas atlantica (strain T6c / ATCC BAA-1087).